An 884-amino-acid polypeptide reads, in one-letter code: Cadherin-1 (884 aa).

The signal sequence occupies residues 1–23 (MGARCRSFSALLLLLQVSSWLCQ). A propeptide spanning residues 24 to 156 (ELEPESCSPG…VYPGLRRQKR (133 aa)) is cleaved from the precursor. The interval 119-139 (KSMGHHHHRHHHRDPASESNP) is disordered. Over residues 121 to 131 (MGHHHHRHHHR) the composition is skewed to basic residues. Cadherin domains follow at residues 157 to 264 (DWVI…RPEF), 265 to 377 (TQEV…APVF), 378 to 488 (NPST…APIF), 489 to 595 (MPAE…DNAP), and 596 to 699 (IPEP…NCMK). Residues 157 to 709 (DWVIPPISCP…AGIVAAGLQV (553 aa)) are Extracellular-facing. D259 is a binding site for Ca(2+). Residues S282 and S287 are each glycosylated (O-linked (Man...) serine). D290 contributes to the Ca(2+) binding site. Residues T360, T472, T474, and T511 are each glycosylated (O-linked (Man...) threonine). N560 is a glycosylation site (N-linked (GlcNAc...) asparagine). O-linked (Man...) threonine glycans are attached at residues T578, T580, and T582. N639 carries an N-linked (GlcNAc...) asparagine glycan. A helical membrane pass occupies residues 710-733 (PAILGILGGILALLILILLLLLFL). Residues 734–884 (RRRTVVKEPL…ADMYGGGEDD (151 aa)) lie on the Cytoplasmic side of the membrane. Residues 749 to 808 (DTRDNVYYYDEEGGGEEDQDFDLSQLHRGLDARPEVTRNDVAPTLMSVPQYRPRPANPDE) form a disordered region. Phosphotyrosine; by SRC occurs at positions 755, 756, and 757. Residues 757–769 (YDEEGGGEEDQDF) show a composition bias toward acidic residues. Positions 760 to 771 (EGGGEEDQDFDL) are required for binding CTNND1 and PSEN1. Phosphoserine is present on S772. The span at 776 to 786 (RGLDARPEVTR) shows a compositional bias: basic and acidic residues. S795, S840, S842, and S848 each carry phosphoserine. The segment at 813–884 (IDENLKAADS…ADMYGGGEDD (72 aa)) is required for binding alpha, beta and gamma catenins.

As to quaternary structure, homodimer; disulfide-linked. Component of an E-cadherin/ catenin adhesion complex composed of at least E-cadherin/CDH1, beta-catenin/CTNNB1 or gamma-catenin/JUP, and potentially alpha-catenin/CTNNA1; the complex is located to adherens junctions. Found in a complex composed of CDH1, RAP1A and PKP3; PKP3 acts as a scaffold protein within the complex, the complex is required for CDH1 localization to mature desmosome cell junctions. Interacts with the TRPV4 and CTNNB1 complex. Interacts with CTNND1. The stable association of CTNNA1 is controversial as CTNNA1 was shown not to bind to F-actin when assembled in the complex. Alternatively, the CTNNA1-containing complex may be linked to F-actin by other proteins such as LIMA1. Interaction with PSEN1, cleaves CDH1 resulting in the disassociation of cadherin-based adherens junctions (CAJs). Interacts with AJAP1 and DLGAP5. Interacts with TBC1D2. Interacts with LIMA1. Interacts with CAV1. Interacts with PIP5K1C. Interacts with RAB8B. Interacts with DDR1; this stabilizes CDH1 at the cell surface and inhibits its internalization. Interacts with RAPGEF2. Interacts with KLRG1. Forms a ternary complex composed of ADAM10, CADH1 and EPHA4; within the complex, CADH1 is cleaved by ADAM10 which disrupts adherens junctions. Interacts with SPEF1. Interacts with CTNNB1 and PKP2. Interacts with AMOTL2; the interaction may facilitate binding of radial actin fibers to cell junction complexes. Interacts with DSG3; the interaction is required for CDH1 localization to developing adherens junctions. During apoptosis or with calcium influx, cleaved by a membrane-bound metalloproteinase (ADAM10), PS1/gamma-secretase and caspase-3. Processing by the metalloproteinase, induced by calcium influx, causes disruption of cell-cell adhesion and the subsequent release of beta-catenin into the cytoplasm. The residual membrane-tethered cleavage product is rapidly degraded via an intracellular proteolytic pathway. Cleavage by caspase-3 releases the cytoplasmic tail resulting in disintegration of the actin microfilament system. The gamma-secretase-mediated cleavage promotes disassembly of adherens junctions. During development of the cochlear organ of Corti, cleavage by ADAM10 at adherens junctions promotes pillar cell separation. In terms of processing, O-glycosylated. O-manosylated by TMTC1, TMTC2, TMTC3 or TMTC4. Ser-287 and Thr-511 are O-manosylated by TMTC2 or TMTC4 but not TMTC1 or TMTC3. Post-translationally, N-glycosylation at Asn-639 is essential for expression, folding and trafficking. Addition of bisecting N-acetylglucosamine by MGAT3 modulates its cell membrane location. Ubiquitinated by a SCF complex containing SKP2, which requires prior phosphorylation by CK1/CSNK1A1. Ubiquitinated by CBLL1/HAKAI, requires prior phosphorylation at Tyr-756. As to expression, expressed in inner and outer pillar cells of the organ of Corti (at protein level). Expressed in granuloma macrophages (at protein level). Expressed in the epidermal keratinocytes of the skin from birth (at protein level). Expressed in non-neural epithelial tissues.

The protein resides in the cell junction. It is found in the adherens junction. It localises to the cell membrane. The protein localises to the endosome. Its subcellular location is the golgi apparatus. The protein resides in the trans-Golgi network. It is found in the cytoplasm. It localises to the desmosome. In terms of biological role, cadherins are calcium-dependent cell adhesion proteins. They preferentially interact with themselves in a homophilic manner in connecting cells; cadherins may thus contribute to the sorting of heterogeneous cell types. CDH1 is involved in mechanisms regulating cell-cell adhesions, mobility and proliferation of epithelial cells. Promotes organization of radial actin fiber structure and cellular response to contractile forces, via its interaction with AMOTL2 which facilitates anchoring of radial actin fibers to CDH1 junction complexes at the cell membrane. Plays a role in the early stages of desmosome cell-cell junction formation via facilitating the recruitment of DSG2 and DSP to desmosome plaques. Has a potent invasive suppressor role. It is a ligand for integrin alpha-E/beta-7. E-Cad/CTF2 promotes non-amyloidogenic degradation of Abeta precursors. Has a strong inhibitory effect on APP C99 and C83 production. Its function is as follows. (Microbial infection) Does not function as a receptor for L.monocytogenes internalin A (InlA); mutating a single surface-exposed residue confers receptor activity to this protein and promotes uptake of the bacteria. This Mus musculus (Mouse) protein is Cadherin-1 (Cdh1).